The sequence spans 111 residues: Succinate dehydrogenase assembly factor 1B, mitochondrial (111 aa).

It belongs to the complex I LYR family. SDHAF1 subfamily. In terms of assembly, interacts with the iron-sulfur protein subunit within the SDH catalytic dimer.

It localises to the mitochondrion matrix. Its function is as follows. Plays an essential role in the assembly of succinate dehydrogenase (SDH), an enzyme complex (also referred to as respiratory complex II) that is a component of both the tricarboxylic acid (TCA) cycle and the mitochondrial electron transport chain, and which couples the oxidation of succinate to fumarate with the reduction of ubiquinone (coenzyme Q) to ubiquinol. Promotes maturation of the iron-sulfur protein subunit of the SDH catalytic dimer, protecting it from the deleterious effects of oxidants. May act together with SDHAF3. In Dictyostelium discoideum (Social amoeba), this protein is Succinate dehydrogenase assembly factor 1B, mitochondrial.